Here is an 805-residue protein sequence, read N- to C-terminus: Transcription factor E2f1 (805 aa).

3 disordered regions span residues 9 to 45, 119 to 208, and 224 to 255; these read APINNSNSSSSHTTTSSNTQRHQQHQQHYGGSGTTGH, AAAA…LRHD, and PASHHPFSLSTPQQQLAASVASSSSSGDRNRA. Low complexity-rich tracts occupy residues 12 to 37 and 119 to 134; these read NNSNSSSSHTTTSSNTQRHQQHQQHY and AAAAATAGHTQQQLQQ. 2 stretches are compositionally biased toward polar residues: residues 144–154 and 181–195; these read RKATGKSNDIT and HHQTVYQKHTASSAP. Residues 147 to 161 carry the PIP-box K+4 motif motif; it reads TGKSNDITNYYKVKR. A compositionally biased stretch (low complexity) spans 240–249; that stretch reads AASVASSSSS. A DNA-binding region spans residues 253–318; that stretch reads NRADTSLGIL…KKSKNNIQWR (66 aa). A dimerization region spans residues 318–411; that stretch reads RCGQSMVSQE…LPNTKLPREI (94 aa). Serine 434 is subject to Phosphoserine. Disordered regions lie at residues 578-650 and 714-743; these read SLTE…QRRS and GAGANADPHQPYSHDRNSLPPGVADCDANS. Low complexity-rich tracts occupy residues 595–615 and 623–636; these read AAAAIAAGSSTTATTTLNSHN and SNHSNHSSSNNSKS. Over residues 637 to 647 the composition is skewed to polar residues; sequence QPPTIGYGSSQ.

This sequence belongs to the E2F/DP family. Heterodimer of E2f and Dp. Cooperates to give sequence-specific DNA binding and optimal trans-activation. Interacts with PCNA. In terms of processing, ubiquitinated by the DCX(DTL) complex, also named CRL4(CDT2) complex, leading to its degradation during S phase. Ubiquitination by the DCX(DTL) complex is essential for cell cycle control and is PCNA-dependent: interacts with PCNA via its PIP-box, while the presence of the containing the 'K+4' motif in the PIP box, recruit the DCX(DTL) complex, leading to its degradation. Segmentally repeated expression throughout early embryos is restricted to the ventral nerve cord in later embryos.

Its subcellular location is the nucleus. Its function is as follows. Transcriptional activator that binds to E2f sites. Required for wild-type growth in mitotic and polytene tissues, Contributes to the expression of replication genes at the G1-S transition and Cyclin E. Activates cell proliferation in wing imaginal disk, which requires expression of vg. The sequence is that of Transcription factor E2f1 from Drosophila melanogaster (Fruit fly).